The sequence spans 408 residues: Succinylornithine transaminase (408 aa).

Lysine 252 is subject to N6-(pyridoxal phosphate)lysine.

This sequence belongs to the class-III pyridoxal-phosphate-dependent aminotransferase family. AstC subfamily. Requires pyridoxal 5'-phosphate as cofactor.

The catalysed reaction is N(2)-succinyl-L-ornithine + 2-oxoglutarate = N-succinyl-L-glutamate 5-semialdehyde + L-glutamate. It participates in amino-acid degradation; L-arginine degradation via AST pathway; L-glutamate and succinate from L-arginine: step 3/5. Functionally, catalyzes the transamination of N(2)-succinylornithine and alpha-ketoglutarate into N(2)-succinylglutamate semialdehyde and glutamate. Can also act as an acetylornithine aminotransferase. In Salmonella enteritidis PT4 (strain P125109), this protein is Succinylornithine transaminase.